We begin with the raw amino-acid sequence, 265 residues long: MQTQSLNQTSYVFRTENLNVYYGSNLAVKNVTLDIPARQITAFIGPSGCGKSTILRCFNRTNDLIPGARVEGKLTYHGKDLYAKEVDPVAVRRRIGMVFQRPNPFPKSIYDNVAYGPRVLGMKVDLDEVVETSLKRAALWDEVKDKLKENGQSLSGGQQQRLCIARALAVQPDVILMDEPCSALDPISTRRIEELMKELEEEYTIIIVTHNMQQASRVSDMTAFFSVELVGSNRVGELIEFDRTEVIFNSPTKQATRDYVEGRFG.

Positions 13–260 (FRTENLNVYY…PTKQATRDYV (248 aa)) constitute an ABC transporter domain. 45-52 (GPSGCGKS) serves as a coordination point for ATP.

The protein belongs to the ABC transporter superfamily. Phosphate importer (TC 3.A.1.7) family. As to quaternary structure, the complex is composed of two ATP-binding proteins (PstB), two transmembrane proteins (PstC and PstA) and a solute-binding protein (PstS).

It is found in the cell inner membrane. The enzyme catalyses phosphate(out) + ATP + H2O = ADP + 2 phosphate(in) + H(+). Part of the ABC transporter complex PstSACB involved in phosphate import. Responsible for energy coupling to the transport system. The sequence is that of Phosphate import ATP-binding protein PstB 2 from Synechococcus sp. (strain JA-2-3B'a(2-13)) (Cyanobacteria bacterium Yellowstone B-Prime).